A 70-amino-acid chain; its full sequence is ATP synthase subunit c (70 aa).

The next 2 membrane-spanning stretches (helical) occupy residues I4–I24 and I45–F65.

It belongs to the ATPase C chain family. As to quaternary structure, F-type ATPases have 2 components, F(1) - the catalytic core - and F(0) - the membrane proton channel. F(1) has five subunits: alpha(3), beta(3), gamma(1), delta(1), epsilon(1). F(0) has three main subunits: a(1), b(2) and c(10-14). The alpha and beta chains form an alternating ring which encloses part of the gamma chain. F(1) is attached to F(0) by a central stalk formed by the gamma and epsilon chains, while a peripheral stalk is formed by the delta and b chains.

The protein resides in the cell membrane. In terms of biological role, f(1)F(0) ATP synthase produces ATP from ADP in the presence of a proton or sodium gradient. F-type ATPases consist of two structural domains, F(1) containing the extramembraneous catalytic core and F(0) containing the membrane proton channel, linked together by a central stalk and a peripheral stalk. During catalysis, ATP synthesis in the catalytic domain of F(1) is coupled via a rotary mechanism of the central stalk subunits to proton translocation. Its function is as follows. Key component of the F(0) channel; it plays a direct role in translocation across the membrane. A homomeric c-ring of between 10-14 subunits forms the central stalk rotor element with the F(1) delta and epsilon subunits. The polypeptide is ATP synthase subunit c (Staphylococcus haemolyticus (strain JCSC1435)).